Here is a 78-residue protein sequence, read N- to C-terminus: Small venom protein 2 (78 aa).

The first 19 residues, 1 to 19, serve as a signal peptide directing secretion; the sequence is MKFIVLLGALLALLVAVSA. Positions 20–42 are excised as a propeptide; it reads DRIAREAPEMESVDEAVLTRQAR.

As to expression, expressed by the venom gland.

The protein localises to the secreted. The chain is Small venom protein 2 from Pimpla hypochondriaca (Parasitoid wasp).